Here is a 255-residue protein sequence, read N- to C-terminus: tRNA (guanine-N(1)-)-methyltransferase (255 aa).

Residues glycine 113 and 133–138 (IGDYVL) contribute to the S-adenosyl-L-methionine site.

This sequence belongs to the RNA methyltransferase TrmD family. In terms of assembly, homodimer.

Its subcellular location is the cytoplasm. The catalysed reaction is guanosine(37) in tRNA + S-adenosyl-L-methionine = N(1)-methylguanosine(37) in tRNA + S-adenosyl-L-homocysteine + H(+). Its function is as follows. Specifically methylates guanosine-37 in various tRNAs. The chain is tRNA (guanine-N(1)-)-methyltransferase from Escherichia coli O6:K15:H31 (strain 536 / UPEC).